The sequence spans 487 residues: 4-alpha-glucanotransferase (487 aa).

Belongs to the disproportionating enzyme family.

The protein localises to the cytoplasm. It carries out the reaction Transfers a segment of a (1-&gt;4)-alpha-D-glucan to a new position in an acceptor, which may be glucose or a (1-&gt;4)-alpha-D-glucan.. Its function is as follows. Catalyzes a disproportionation reaction in which single or multiple glucose units from oligosaccharides are transferred to the 4-hydroxyl group of acceptor sugars. Glucose, maltose and maltotriose can act as acceptor, whereas of the three only maltotriose can act as donor. The protein is 4-alpha-glucanotransferase (malQ) of Clostridium butyricum.